Consider the following 623-residue polypeptide: MVSKQQTMGFQTEVKQMLHLVVHSLYSNKEIFLRELISNASDALDKLRFLALSNGSLFENDSDLKISIQINEKLQTITISDNGIGLSWEEAVENLGTIAKSGTKEFISQLTGEQAKDSQLIGQFGVGFYSAFIVADKVTVKSRRAGLQPEDGIVWESKGDGEFTIGYEKKSTRGTEITLHLKPENDEFLSDWRIRGIISKYSDHICWPIVMKKLSEEGKESKEFETVNKATALWTLQKSEISEEDYKQLYKHISHDYMDPLTWSHNHVEGKHEYITLLYIPAHAPFDLWQHEAKHGLKLYVKRVFIMDEATQFLPRYLRFVKGIVDASDLPLNISREILQDNKQVESIRAACTKRVLSMLEKMATNDKETYQKFWNEFGLVLKEGPIEDFANKEAIAKLLRFSTTASGSEKQEVSLEEYVSRMKEGQDKIYYITASSYNAAKNSPHLEIFRKKGIEVLLLSDKVDEWLVGYMNEFAGKKLQSISKGKVELGDDETSEQIKEQEKTLEPLIKHIKSVLNERVKDVLLTNRLTDSPACVVADEQDMGLEMQRILQAAGQQVPVSKPIFEINPDHALIKRLHDIQDDNQFELWVTMLFEQAVLAEGGQLDNPADFVNRVNRLLVSS.

The a; substrate-binding stretch occupies residues 1–336 (MVSKQQTMGF…ASDLPLNISR (336 aa)). The interval 337-550 (EILQDNKQVE…EQDMGLEMQR (214 aa)) is b. A c region spans residues 551–623 (ILQAAGQQVP…NRVNRLLVSS (73 aa)).

This sequence belongs to the heat shock protein 90 family. In terms of assembly, homodimer.

It localises to the cytoplasm. Its function is as follows. Molecular chaperone. Has ATPase activity. The chain is Chaperone protein HtpG from Legionella pneumophila subsp. pneumophila (strain Philadelphia 1 / ATCC 33152 / DSM 7513).